A 2587-amino-acid chain; its full sequence is Protein KINKY POLLEN (2587 aa).

An N-terminal signal peptide occupies residues 1-27 (MAAFLVMFIFTIALFVALLWVFFKSLP). Residue Asn71 is glycosylated (N-linked (GlcNAc...) asparagine). A disordered region spans residues 103–124 (PSHSSKGPRKPKTRKSSSGGKG). Positions 108 to 117 (KGPRKPKTRK) are enriched in basic residues. N-linked (GlcNAc...) asparagine glycans are attached at residues Asn262, Asn281, and Asn485. Residues 270–290 (SKGEVIDSSSGNTTSEKPPKQ) are disordered. The span at 276–285 (DSSSGNTTSE) shows a compositional bias: polar residues. The tract at residues 589-611 (GSSSKNKQEKGAHRSKPPSGRGT) is disordered. Residues 691 to 716 (TLNKEIQSTQVELETAKAIYQEFLEE) adopt a coiled-coil conformation. Residues 784–814 (QHGNRNPEEASTVTGDKQKEEPTTTPNSLDK) are disordered. Residues Asn1155, Asn1250, Asn1281, and Asn1486 are each glycosylated (N-linked (GlcNAc...) asparagine). Disordered stretches follow at residues 1571–1608 (HCSK…KHPD), 1646–1673 (VDAR…DGYN), and 1729–1797 (EGNQ…PEEE). Over residues 1576–1590 (AQMSRTSSLSGSTDR) the composition is skewed to polar residues. N-linked (GlcNAc...) asparagine glycosylation is present at Asn1595. Residues 1646–1666 (VDARSTKEKQSEPEENSHSDP) show a composition bias toward basic and acidic residues. A compositionally biased stretch (polar residues) spans 1746-1760 (KQPSTGSGNLASQSK). Asn1861, Asn1951, Asn1981, Asn2036, and Asn2278 each carry an N-linked (GlcNAc...) asparagine glycan. Residues 2006–2036 (IEEVELAKIELEAKERDRMMLLDDIRKLTQN) adopt a coiled-coil conformation. The segment covering 2274 to 2287 (QGSKNQSLKSSTIR) has biased composition (polar residues). Disordered regions lie at residues 2274–2299 (QGSK…TSSF), 2319–2360 (SMEH…KKSR), and 2442–2469 (KDDI…RPGD). Basic and acidic residues-rich tracts occupy residues 2289-2299 (SGRELRRTSSF), 2322-2336 (HQGE…DSKT), 2343-2359 (SVHE…DKKS), and 2442-2458 (KDDI…RTDQ). Asn2513 and Asn2544 each carry an N-linked (GlcNAc...) asparagine glycan. Residues 2533 to 2587 (IRRHSKKFQNQNTTKGSKKTQLSPTLSPPKEEDQYESDSSSGSSAYEEFLDQNQI) form a disordered region. The segment covering 2540 to 2557 (FQNQNTTKGSKKTQLSPT) has biased composition (polar residues). The span at 2569–2579 (SDSSSGSSAYE) shows a compositional bias: low complexity.

It belongs to the SABRE family. Mostly expressed in pollen and roots, especially in tip-growing cells, but also present in seedlings, stems, leaves, buds, flowers, siliques and seeds.

Its subcellular location is the secreted. It is found in the golgi apparatus. In terms of biological role, may be involved in membrane trafficking. Required for tip growth in pollen tubes and root hairs. This Arabidopsis thaliana (Mouse-ear cress) protein is Protein KINKY POLLEN.